The primary structure comprises 384 residues: Calreticulin-3 (384 aa).

A signal peptide spans 1-19; the sequence is MARALVQLWAICMLRVALA. The segment at 20–197 is N-domain; that stretch reads TVYFQEEFLD…GQSIESGSIE (178 aa). N-linked (GlcNAc...) asparagine glycosylation is present at N42. A disulfide bridge links C105 with C137. An alpha-D-glucoside-binding residues include Y109, K111, Y128, and D135. 7 repeat units span residues 191-202, 208-219, 221-230, 234-245, 249-259, 263-271, and 273-283. Residues 191–245 form a 4 X approximate repeats region; sequence IESGSIEYDWNLTSLKKETSPAESKDWEQTKDNKAQDWEKHFLDASTSKQSDWNG. Residues 198–294 are P-domain; it reads YDWNLTSLKK…YLTQYDLSEF (97 aa). N-linked (GlcNAc...) asparagine glycosylation occurs at N201. The interval 249–283 is 3 X approximate repeats; it reads GDWPAPMLQKPPYQDGLKPEGIHKDVWLHRKMKNT. Residues 295 to 384 are C-domain; the sequence is ENIGAIGLEL…FNQFHRRNEL (90 aa). E303 serves as a coordination point for an alpha-D-glucoside. The short motif at 381 to 384 is the Prevents secretion from ER element; that stretch reads RNEL.

The protein belongs to the calreticulin family. In terms of assembly, component of an EIF2 complex at least composed of CELF1/CUGBP1, CALR, CALR3, EIF2S1, EIF2S2, HSP90B1 and HSPA5. Testis specific.

The protein resides in the endoplasmic reticulum lumen. During spermatogenesis, may act as a lectin-independent chaperone for specific client proteins such as ADAM3. Required for sperm fertility. CALR3 capacity for calcium-binding may be absent or much lower than that of CALR. This Homo sapiens (Human) protein is Calreticulin-3 (CALR3).